We begin with the raw amino-acid sequence, 378 residues long: Transcription initiation factor IIA subunit 1 (378 aa).

Position 2 is an N-acetylalanine (Ala2). 3 stretches are compositionally biased toward low complexity: residues 69-79 (QVQQQHQPQQQ), 89-106 (QQAQ…TQQV), and 247-281 (PAQA…TGDT). 2 disordered regions span residues 69–108 (QVQQ…QVLI) and 247–331 (PAQA…QELF). Phosphoserine; by TAF1 occurs at positions 282, 283, 318, and 323. Residues 282-331 (SSEEDEDEEEDYDDDEEEDKEKDGAEDGQVEEEPLNSEDDVSDEEGQELF) are compositionally biased toward acidic residues. Positions 345 and 346 each coordinate DNA.

The protein belongs to the TFIIA subunit 1 family. As to quaternary structure, TFIIA is a heterodimer of the large unprocessed subunit 1 and a small subunit gamma. It was originally believed to be a heterotrimer of an alpha (p35), a beta (p19) and a gamma subunit (p12). TFIIA forms a complex with TBP. Part of TBP-based Pol II pre-initiation complex (PIC), in which Pol II core assembles with general transcription factors and other specific initiation factors including GTF2E1, GTF2E2, GTF2F1, GTF2F2, TCEA1, ERCC2, ERCC3, GTF2H2, GTF2H3, GTF2H4, GTF2H5, GTF2A1, GTF2A2, GTF2B and TBP; this large multi-subunit PIC complex mediates DNA unwinding and targets Pol II core to the transcription start site where the first phosphodiester bond forms. The alpha and beta subunits are postranslationally produced from the precursor form by TASP1. The cleavage promotes proteasomal degradation. As to expression, expressed in pachytene spermatocytes and spermatids.

It localises to the nucleus. TFIIA is a component of the transcription machinery of RNA polymerase II and plays an important role in transcriptional activation. TFIIA in a complex with TBP mediates transcriptional activity. This chain is Transcription initiation factor IIA subunit 1 (Gtf2a1), found in Mus musculus (Mouse).